The primary structure comprises 337 residues: WAT1-related protein At1g11460 (337 aa).

10 consecutive transmembrane segments (helical) span residues 14–34 (WPPI…NALV), 46–66 (IIGA…AYIL), 83–103 (FISG…GLSY), 107–127 (TVAC…ALIL), 139–159 (AGMI…FLTF), 188–208 (WLLG…WILF), 220–240 (FSST…LSLY), 254–274 (FVIG…TVSV), 284–304 (VFVS…DFII), and 309–329 (LYLG…VFLW). An EamA 1 domain is found at 27–157 (MGSVNALVKK…IICISGALFL (131 aa)). An EamA 2 domain is found at 220 to 328 (FSSTCLMSIF…GTITGLYVFL (109 aa)).

Belongs to the drug/metabolite transporter (DMT) superfamily. Plant drug/metabolite exporter (P-DME) (TC 2.A.7.4) family.

The protein localises to the membrane. This is WAT1-related protein At1g11460 from Arabidopsis thaliana (Mouse-ear cress).